A 1024-amino-acid chain; its full sequence is MMLHEAVMLEIYRQALSASELTSPRCQSRDSNTSAGAGAGMADVRCPSNESHCSANDRLTPAATPTLTPTEATISPNSVGLPLTATLPPAAAVALLPPQSAAMAAYLAAAQQNHLLLTNPLAAAASLVQHATQQAVVEGEVESPALDFSRKRPKSHGDDDQEEDQEQDQEQEQEQEPDHDVQCDNGPLDLSVSTGKRQESVSPPARKIPRSISADYKSPLPPGSWMPPINPYLAAVAAKTGGLGYSKLAPSEASKALEKMTEMSRLETSPTAARSLGATSSVGAGVPAGASSNSGGRHSAWQSHWLNKGADTAKDVFKCVWCKQSFSTLANLTAHMKETQHCGVQIPSPLPTGGVGTPSAPPPTRLATSASNSACSSSSSSTSSSSNSSKSELNMLIKETMPLPRKLVRGQDVWLGKGAEQTRQILKCMWCGQSFRSLAEMTSHMQETQHYTNIISQEQIISWKSGDERERPTNTGVPSTSTAAPSSPSCTAPSVSAVLTCKVCDQAFGSLKELSTHMAQKSHYKESPAPSASPPAAGTGNPKRGRQNRNEKRKKSLPVRKLLELERSGSNSSLDSALKPLRDFAAATKITCEKCGSKIETALFVEHIRKCLGESIPIPPRRSNAGVDRLPSPSLGLGAEKPPSVLNALEQLIEKSFESRTSRTMTHGGYSEAGTPLGASILKRLGIEDSSDYTKPLMDAQAMHLLRSSFASRDRSASESSSASRVESSYTPDRQQATPHKSPDTPAPPPPPPPTIKAEPLEAEPLVGCDREGCSPRQQIQVKKEFSMEACRESPRSVSKSPAPQTERSPPDNGSLLALNSMFDQLSGVENSGNNNSGHCFNNNNSCSSVSAQKPKAHPLAALQKLCETTDPPSTGLRSASSAGSSTASATLPSANGNDLVAFSWACNEAVLSASNGGSAGDSSIIKCSYCDTPFASKGAYRHHLSKVHFVKDAGEDSPRLKSPAVQSPRSMPLASPRRSASRSPATGSQQPPPSPTISPYDESPQSKFLKYTELAKQLSSKNA.

Over residues 20–35 (ELTSPRCQSRDSNTSA) the composition is skewed to polar residues. Disordered stretches follow at residues 20–40 (ELTS…AGAG) and 138–215 (EGEV…ISAD). Residues 159-175 (DDQEEDQEQDQEQEQEQ) are compositionally biased toward acidic residues. The segment at 317–341 (FKCVWCKQSFSTLANLTAHMKETQH) adopts a C2H2-type 1 zinc-finger fold. Residues 350–392 (LPTGGVGTPSAPPPTRLATSASNSACSSSSSSTSSSSNSSKSE) are disordered. Residues 368–391 (TSASNSACSSSSSSTSSSSNSSKS) are compositionally biased toward low complexity. Residues 426-450 (LKCMWCGQSFRSLAEMTSHMQETQH) form a C2H2-type 2 zinc finger. Disordered regions lie at residues 466-489 (GDER…SSPS), 519-576 (AQKS…SLDS), 712-759 (SRDR…IKAE), 786-818 (FSME…SLLA), and 868-891 (ETTD…ASAT). Residues 477 to 489 (VPSTSTAAPSSPS) show a composition bias toward low complexity. The C2H2-type 3 zinc-finger motif lies at 499–523 (LTCKVCDQAFGSLKELSTHMAQKSH). A compositionally biased stretch (low complexity) spans 527–537 (SPAPSASPPAA). Over residues 543-558 (KRGRQNRNEKRKKSLP) the composition is skewed to basic residues. Low complexity predominate over residues 718-729 (SESSSASRVESS). A compositionally biased stretch (pro residues) spans 745–755 (TPAPPPPPPPT). Basic and acidic residues predominate over residues 786-795 (FSMEACRESP). Positions 796–808 (RSVSKSPAPQTER) are enriched in polar residues. Low complexity predominate over residues 874-891 (STGLRSASSAGSSTASAT). The segment at 926-949 (IKCSYCDTPFASKGAYRHHLSKVH) adopts a C2H2-type 4 zinc-finger fold. Positions 954–1004 (AGEDSPRLKSPAVQSPRSMPLASPRRSASRSPATGSQQPPPSPTISPYDES) are disordered. The span at 968–990 (SPRSMPLASPRRSASRSPATGSQ) shows a compositional bias: low complexity.

The protein belongs to the teashirt C2H2-type zinc-finger protein family. In terms of tissue distribution, expression in the Malpighian tubules (MTs) and stomatogastric nervous system starts at embryonic stage 10. At stage 11, expression in the head domain is initiated in the clypeolabrum in two bilaterally symmetric clusters of cells. At stage 12, expression appears in the central nervous system (CNS) of the trunk and the epidermis. The staining in the hindgut is maintained throughout embryogenesis. At stage 13, expression is present in elongating MTs. The anterior staining is detected in cells that invaginate into the stomodeum and by stage 15 onwards, in cells close to the pharynx. Also expressed in cells of the brain, the second constriction of the gut, the trunk epidermis, the anterior segments of the CNS (the three thoracic and the first two abdominal segments) and in the MTs. From stage 12 onwards, tsh and tio are colocalized in some cells.

The protein resides in the nucleus. Its function is as follows. Tiptop (tio) and teashirt (tsh) have, on the whole, common activities. Tio and tsh repress each other's expression and tsh has a crucial role for trunk patterning that is in part masked by ectopic expression of tiptop. Both genes share a common activity required for the activation of Ser and svb and the maintenance of en and wg. The chain is Protein tiptop (tio) from Drosophila melanogaster (Fruit fly).